Consider the following 221-residue polypeptide: Transmembrane protein 225B (221 aa).

4 consecutive transmembrane segments span residues 14-34 (WAIV…VSIF), 77-97 (VFLL…MPFA), 109-129 (FVLA…LVLH), and 147-167 (VLWP…AGTI).

It is found in the membrane. The polypeptide is Transmembrane protein 225B (Homo sapiens (Human)).